The chain runs to 359 residues: Molybdenum import ATP-binding protein ModC (359 aa).

An ABC transporter domain is found at 1–233 (MSGLTVSIRG…IDAESEGGGV (233 aa)). 32-39 (GHSGAGKT) serves as a coordination point for ATP. In terms of domain architecture, Mop spans 289–355 (AISIRNLLPV…VKAVSVDRAA (67 aa)).

This sequence belongs to the ABC transporter superfamily. Molybdate importer (TC 3.A.1.8) family. The complex is composed of two ATP-binding proteins (ModC), two transmembrane proteins (ModB) and a solute-binding protein (ModA).

It is found in the cell inner membrane. It carries out the reaction molybdate(out) + ATP + H2O = molybdate(in) + ADP + phosphate + H(+). Its function is as follows. Part of the ABC transporter complex ModABC involved in molybdenum import. Responsible for energy coupling to the transport system. The protein is Molybdenum import ATP-binding protein ModC of Brucella abortus (strain 2308).